We begin with the raw amino-acid sequence, 377 residues long: Anhydro-N-acetylmuramic acid kinase (377 aa).

Residue 18–25 (GTSADGID) coordinates ATP.

This sequence belongs to the anhydro-N-acetylmuramic acid kinase family.

The catalysed reaction is 1,6-anhydro-N-acetyl-beta-muramate + ATP + H2O = N-acetyl-D-muramate 6-phosphate + ADP + H(+). It participates in amino-sugar metabolism; 1,6-anhydro-N-acetylmuramate degradation. It functions in the pathway cell wall biogenesis; peptidoglycan recycling. Catalyzes the specific phosphorylation of 1,6-anhydro-N-acetylmuramic acid (anhMurNAc) with the simultaneous cleavage of the 1,6-anhydro ring, generating MurNAc-6-P. Is required for the utilization of anhMurNAc either imported from the medium or derived from its own cell wall murein, and thus plays a role in cell wall recycling. The polypeptide is Anhydro-N-acetylmuramic acid kinase (Xanthomonas oryzae pv. oryzae (strain MAFF 311018)).